Here is a 419-residue protein sequence, read N- to C-terminus: Subtilisin-like protease 2 (419 aa).

The signal sequence occupies residues 1–16 (MQLLNFGLLLLPFVAG). The propeptide occupies 17-122 (DLAPQPEPLL…VHPDQHVYLA (106 aa)). The Inhibitor I9 domain maps to 36–122 (QYIVTLKEGL…VHPDQHVYLA (87 aa)). In terms of domain architecture, Peptidase S8 spans 131–419 (RWGLGYMSSK…IQERKFKLPK (289 aa)). Catalysis depends on charge relay system residues Asp-169 and His-201. Asn-248, Asn-261, and Asn-348 each carry an N-linked (GlcNAc...) asparagine glycan. The Charge relay system role is filled by Ser-357. An N-linked (GlcNAc...) asparagine glycan is attached at Asn-388.

The protein belongs to the peptidase S8 family.

It localises to the secreted. Its function is as follows. Secreted subtilisin-like serine protease with keratinolytic activity that contributes to pathogenicity. The protein is Subtilisin-like protease 2 (SUB2) of Arthroderma benhamiae (Trichophyton mentagrophytes).